We begin with the raw amino-acid sequence, 255 residues long: 5'-nucleotidase SurE (255 aa).

Positions 8, 9, 40, and 93 each coordinate a divalent metal cation.

It belongs to the SurE nucleotidase family. The cofactor is a divalent metal cation.

The protein localises to the cytoplasm. The enzyme catalyses a ribonucleoside 5'-phosphate + H2O = a ribonucleoside + phosphate. Its function is as follows. Nucleotidase that shows phosphatase activity on nucleoside 5'-monophosphates. The sequence is that of 5'-nucleotidase SurE from Rhodopseudomonas palustris (strain BisB5).